The primary structure comprises 652 residues: Bifunctional protein ThiO/ThiG (652 aa).

The tract at residues methionine 1–serine 366 is thiO. FAD is bound by residues isoleucine 5–valine 19 and alanine 44–methionine 46. Glutamate 52 is a glycine binding site. Valine 173 is a binding site for FAD. Residues arginine 301 and arginine 327 each coordinate glycine. Residue histidine 325–leucine 331 participates in FAD binding. The segment at proline 393–serine 652 is thiG. The active-site Schiff-base intermediate with DXP is the lysine 494. Residues glycine 555, alanine 581 to glycine 582, and asparagine 603 to serine 604 contribute to the 1-deoxy-D-xylulose 5-phosphate site.

This sequence in the N-terminal section; belongs to the DAO family. ThiO subfamily. The protein in the C-terminal section; belongs to the ThiG family. Interacts with ThiH and ThiS. It depends on FAD as a cofactor.

The protein resides in the cytoplasm. It carries out the reaction glycine + O2 + H2O = glyoxylate + H2O2 + NH4(+). It catalyses the reaction [ThiS sulfur-carrier protein]-C-terminal-Gly-aminoethanethioate + 2-iminoacetate + 1-deoxy-D-xylulose 5-phosphate = [ThiS sulfur-carrier protein]-C-terminal Gly-Gly + 2-[(2R,5Z)-2-carboxy-4-methylthiazol-5(2H)-ylidene]ethyl phosphate + 2 H2O + H(+). It functions in the pathway cofactor biosynthesis; thiamine diphosphate biosynthesis. Catalyzes the FAD-dependent oxidative deamination of glycine. Is essential for thiamine biosynthesis since the oxidation of glycine catalyzed by ThiO generates the glycine imine intermediate (dehydroglycine) required for the biosynthesis of the thiazole ring of thiamine pyrophosphate. Its function is as follows. Catalyzes the rearrangement of 1-deoxy-D-xylulose 5-phosphate (DXP) to produce the thiazole phosphate moiety of thiamine. Sulfur is provided by the thiocarboxylate moiety of the carrier protein ThiS. In vitro, sulfur can be provided by H(2)S. The sequence is that of Bifunctional protein ThiO/ThiG (thiO/thiG) from Nostoc sp. (strain PCC 7120 / SAG 25.82 / UTEX 2576).